Reading from the N-terminus, the 364-residue chain is Chaperone protein DnaJ (364 aa).

The region spanning 4-69 (DYYEILGLSK…NKKAKYDRFG (66 aa)) is the J domain. A CR-type zinc finger spans residues 135 to 213 (GYKNNINITR…CKGKGRITNQ (79 aa)). Zn(2+) contacts are provided by cysteine 148, cysteine 151, cysteine 165, cysteine 168, cysteine 187, cysteine 190, cysteine 201, and cysteine 204. 4 CXXCXGXG motif repeats span residues 148 to 155 (CHSCLGKK), 165 to 172 (CNMCNGSG), 187 to 194 (CSKCYGEG), and 201 to 208 (CKSCKGKG).

The protein belongs to the DnaJ family. As to quaternary structure, homodimer. Requires Zn(2+) as cofactor.

It localises to the cytoplasm. Its function is as follows. Participates actively in the response to hyperosmotic and heat shock by preventing the aggregation of stress-denatured proteins and by disaggregating proteins, also in an autonomous, DnaK-independent fashion. Unfolded proteins bind initially to DnaJ; upon interaction with the DnaJ-bound protein, DnaK hydrolyzes its bound ATP, resulting in the formation of a stable complex. GrpE releases ADP from DnaK; ATP binding to DnaK triggers the release of the substrate protein, thus completing the reaction cycle. Several rounds of ATP-dependent interactions between DnaJ, DnaK and GrpE are required for fully efficient folding. Also involved, together with DnaK and GrpE, in the DNA replication of plasmids through activation of initiation proteins. The sequence is that of Chaperone protein DnaJ from Borrelia garinii subsp. bavariensis (strain ATCC BAA-2496 / DSM 23469 / PBi) (Borreliella bavariensis).